Consider the following 921-residue polypeptide: DNA mismatch repair protein MutS 1 (921 aa).

Residue 619-626 (GPNMSGKS) coordinates ATP. Positions 837–887 (FRDGAAQSGGAAAGSTAEPVATDGDPEHAPGEAAAEGPKGDERAASLDSET) are disordered. A compositionally biased stretch (low complexity) spans 840 to 853 (GAAQSGGAAAGSTA).

This sequence belongs to the DNA mismatch repair MutS family.

In terms of biological role, this protein is involved in the repair of mismatches in DNA. It is possible that it carries out the mismatch recognition step. This protein has a weak ATPase activity. In Haloarcula marismortui (strain ATCC 43049 / DSM 3752 / JCM 8966 / VKM B-1809) (Halobacterium marismortui), this protein is DNA mismatch repair protein MutS 1.